The following is a 298-amino-acid chain: Ethanolamine ammonia-lyase small subunit (298 aa).

Residues Val-210, Glu-231, and Cys-261 each coordinate adenosylcob(III)alamin.

It belongs to the EutC family. In terms of assembly, the basic unit is a heterodimer which dimerizes to form tetramers. The heterotetramers trimerize; 6 large subunits form a core ring with 6 small subunits projecting outwards. The cofactor is adenosylcob(III)alamin.

Its subcellular location is the bacterial microcompartment. The catalysed reaction is ethanolamine = acetaldehyde + NH4(+). The protein operates within amine and polyamine degradation; ethanolamine degradation. Its function is as follows. Catalyzes the deamination of various vicinal amino-alcohols to oxo compounds. Allows this organism to utilize ethanolamine as the sole source of nitrogen and carbon in the presence of external vitamin B12. The chain is Ethanolamine ammonia-lyase small subunit from Salmonella heidelberg (strain SL476).